A 284-amino-acid polypeptide reads, in one-letter code: Tropomyosin Por p 1.0101 (284 aa).

M1 carries the N-acetylmethionine modification. The segment at 1-21 is disordered; that stretch reads MDAIKKKMQAMKLEKDDAMDR. A coiled-coil region spans residues 1–280; it reads MDAIKKKMQA…TDELDQAFSE (280 aa). Positions 12 to 21 are enriched in basic and acidic residues; the sequence is KLEKDDAMDR.

This sequence belongs to the tropomyosin family. As to quaternary structure, homodimer. In terms of tissue distribution, expressed in muscle (at protein level). Expressed in pincer muscles.

Its function is as follows. Tropomyosin, in association with the troponin complex, plays a central role in the calcium dependent regulation of muscle contraction. This chain is Tropomyosin Por p 1.0101, found in Portunus pelagicus (Blue swimmer crab).